We begin with the raw amino-acid sequence, 335 residues long: MWAVLPLLCAGAWLLGAPACGAAELAANSLEKFHFQSWMVQHQKKYSSEEYYHRLQAFASNLREINAHNARNHTFKMGLNQFSDMSFDELKRKYLWSEPQNCSATKSNYLRGTGPYPPSMDWRKKGNFVTPVKNQGSCGSCWTFSTTGALESAVAIATGKLPFLAEQQLVDCAQNFNNHGCQGGLPSQAFEYIRYNKGIMGEDTYPYRGQDGDCKYQPSKAIAFVKDVANITLNDEEAMVEAVALHNPVSFAFEVTADFMMYRKGIYSSTSCHKTPDKVNHAVLAVGYGEEKGIPYWIVKNSWGPNWGMKGYFLIERGKNMCGLAACASFPIPLV.

Residues 1–22 (MWAVLPLLCAGAWLLGAPACGA) form the signal peptide. Residues 23–97 (AELAANSLEK…DELKRKYLWS (75 aa)) constitute a propeptide, activation peptide. N-linked (GlcNAc...) asparagine glycosylation is found at N72 and N101. Cystine bridges form between C102/C327, C138/C181, C172/C214, and C272/C322. Positions 106-115 (KSNYLRGTGP) are excised as a propeptide. The active site involves C141. N-linked (GlcNAc...) asparagine glycosylation occurs at N230. Residues H281 and N301 contribute to the active site.

The protein belongs to the peptidase C1 family. As to quaternary structure, composed of a mini chain and a large chain. The large chain may be split into heavy and light chain. All chains are held together by disulfide bonds.

The protein resides in the lysosome. The catalysed reaction is Hydrolysis of proteins, acting as an aminopeptidase (notably, cleaving Arg-|-Xaa bonds) as well as an endopeptidase.. Its function is as follows. Important for the overall degradation of proteins in lysosomes. The polypeptide is Pro-cathepsin H (CTSH) (Bos taurus (Bovine)).